We begin with the raw amino-acid sequence, 404 residues long: Cysteine desulfurase IscS (404 aa).

Pyridoxal 5'-phosphate-binding positions include Ala75–Thr76, Asn155, Gln183, and Ser203–His205. The residue at position 206 (Lys206) is an N6-(pyridoxal phosphate)lysine. A pyridoxal 5'-phosphate-binding site is contributed by Thr243. The active-site Cysteine persulfide intermediate is the Cys328. Residue Cys328 coordinates [2Fe-2S] cluster.

It belongs to the class-V pyridoxal-phosphate-dependent aminotransferase family. NifS/IscS subfamily. As to quaternary structure, homodimer. Forms a heterotetramer with IscU, interacts with other sulfur acceptors. Pyridoxal 5'-phosphate is required as a cofactor.

The protein resides in the cytoplasm. It carries out the reaction (sulfur carrier)-H + L-cysteine = (sulfur carrier)-SH + L-alanine. It functions in the pathway cofactor biosynthesis; iron-sulfur cluster biosynthesis. In terms of biological role, master enzyme that delivers sulfur to a number of partners involved in Fe-S cluster assembly, tRNA modification or cofactor biosynthesis. Catalyzes the removal of elemental sulfur atoms from cysteine to produce alanine. Functions as a sulfur delivery protein for Fe-S cluster synthesis onto IscU, an Fe-S scaffold assembly protein, as well as other S acceptor proteins. This Shewanella baltica (strain OS223) protein is Cysteine desulfurase IscS.